The primary structure comprises 78 residues: UPF0369 protein RF_1112 (78 aa).

This sequence belongs to the SDHAF4 family.

This Rickettsia felis (strain ATCC VR-1525 / URRWXCal2) (Rickettsia azadi) protein is UPF0369 protein RF_1112.